A 64-amino-acid chain; its full sequence is Translation machinery-associated protein 7 homolog (64 aa).

A disordered region spans residues 1-64; sequence MSGRQGGKAK…GGGIKKSGKK (64 aa). Positions 21–50 form a coiled coil; that stretch reads DLSEEDVEFKKKQQEEAKKIKEMAAKAGQR. Over residues 28-44 the composition is skewed to basic and acidic residues; that stretch reads EFKKKQQEEAKKIKEMA. Residues 53-64 show a composition bias toward gly residues; that stretch reads LLGGGIKKSGKK.

This sequence belongs to the TMA7 family.

The sequence is that of Translation machinery-associated protein 7 homolog from Caenorhabditis elegans.